We begin with the raw amino-acid sequence, 417 residues long: D-galactonate dehydratase family member Dd703_0947 (417 aa).

A substrate-binding site is contributed by histidine 127. The active-site Proton donor/acceptor is the tyrosine 158. Aspartate 223 provides a ligand contact to Mg(2+). The active-site Proton donor/acceptor is histidine 225. Glutamate 249 and glutamate 275 together coordinate Mg(2+). Substrate is bound by residues glutamate 275, arginine 296, histidine 325, aspartate 329, and glutamate 352.

It belongs to the mandelate racemase/muconate lactonizing enzyme family. GalD subfamily. Mg(2+) is required as a cofactor.

It carries out the reaction D-mannonate = 2-dehydro-3-deoxy-D-gluconate + H2O. The enzyme catalyses D-gluconate = 2-dehydro-3-deoxy-D-gluconate + H2O. In terms of biological role, has low dehydratase activity with D-mannonate and D-gluconate, suggesting that these are not physiological substrates and that it has no significant role in the in vivo degradation of these compounds. Has no detectable activity with a panel of 70 other acid sugars (in vitro). The polypeptide is D-galactonate dehydratase family member Dd703_0947 (Musicola paradisiaca (strain Ech703) (Dickeya paradisiaca)).